Reading from the N-terminus, the 776-residue chain is Probable E3 ubiquitin-protein ligase HECTD2 (776 aa).

Residues 1 to 46 are disordered; sequence MSEAVRVPSPATPLVVAAAAPEERKGKESEREKLPPIVSAGAGATA. Over residues 7 to 20 the composition is skewed to low complexity; it reads VPSPATPLVVAAAA. Ser9 is subject to Phosphoserine. Basic and acidic residues predominate over residues 21–34; it reads PEERKGKESEREKL. Residues 437-776 form the HECT domain; the sequence is KRADLKKKLK…ISNSEGFGLE (340 aa). Cys744 acts as the Glycyl thioester intermediate in catalysis.

It catalyses the reaction S-ubiquitinyl-[E2 ubiquitin-conjugating enzyme]-L-cysteine + [acceptor protein]-L-lysine = [E2 ubiquitin-conjugating enzyme]-L-cysteine + N(6)-ubiquitinyl-[acceptor protein]-L-lysine.. It functions in the pathway protein modification; protein ubiquitination. Its function is as follows. E3 ubiquitin-protein ligase which accepts ubiquitin from an E2 ubiquitin-conjugating enzyme in the form of a thioester and then directly transfers the ubiquitin to targeted substrates. The chain is Probable E3 ubiquitin-protein ligase HECTD2 (HECTD2) from Pongo abelii (Sumatran orangutan).